The chain runs to 474 residues: MAVDADSANYRIEHDTMGEVRVPAKALWRAQTQRAVENFPISGRGLERTQIRALGLLKGACAQVNSDLGLLAPEKADAIIAAAAEIADGQHDDQFPIDVFQTGSGTSSNMNTNEVIASIAAKGGVTLHPNDDVNMSQSSNDTFPTATHIAATEAAVAHLIPALQQLHDALAAKALDWHTVVKSGRTHLMDAVPVTLGQEFSGYARQIEAGIERVRACLPRLGELAIGGTAVGTGLNAPDDFGVRVVAVLVAQTGLSELRTAANSFEAQAARDGLVEASGALRTIAVSLTKIANDIRWMGSGPLTGLAEIQLPDLQPGSSIMPGKVNPVLPEAVTQVAAQVIGNDAAIAWGGANGAFELNVYIPMMARNILESFKLLTNVSRLFAQRCIAGLTANVEHLRRLAESSPSIVTPLNSAIGYEEAAAVAKQALKERKTIRQTVIDRGLIGDRLSIEDLDRRLDVLAMAKAEQLDSDRL.

Residues 104-106 (SGT), 128-131 (HPND), 138-140 (SSN), and T186 contribute to the substrate site. The active-site Proton donor/acceptor is the H187. S318 is a catalytic residue. Residues S319 and 324-326 (KVN) each bind substrate.

Belongs to the class-II fumarase/aspartase family. Fumarase subfamily. Homotetramer.

Its subcellular location is the cytoplasm. The catalysed reaction is (S)-malate = fumarate + H2O. The protein operates within carbohydrate metabolism; tricarboxylic acid cycle; (S)-malate from fumarate: step 1/1. Functionally, involved in the TCA cycle. Catalyzes the stereospecific interconversion of fumarate to L-malate. The sequence is that of Fumarate hydratase class II from Mycobacterium bovis (strain ATCC BAA-935 / AF2122/97).